A 655-amino-acid polypeptide reads, in one-letter code: p-hydroxybenzoic acid efflux pump subunit AaeB (655 aa).

Residues 1 to 12 are Periplasmic-facing; the sequence is MGIFSIANQHIR. The helical transmembrane segment at 13–33 threads the bilayer; that stretch reads FAVKLACAIVLALFIGFHFQL. Topologically, residues 34–37 are cytoplasmic; sequence ETPR. Residues 38-58 form a helical membrane-spanning segment; the sequence is WAVLTAAIVAAGPAFAAGGEP. At 59–68 the chain is on the periplasmic side; that stretch reads YSGAIRYRGM. A helical transmembrane segment spans residues 69–89; the sequence is LRIIGTFIGCIAALIIIISMI. Residues 90 to 92 are Cytoplasmic-facing; that stretch reads RAP. The chain crosses the membrane as a helical span at residues 93–113; sequence LLMILVCCVWAGFCTWISSLV. The Periplasmic segment spans residues 114 to 120; the sequence is RIENSYA. A helical transmembrane segment spans residues 121–141; sequence WGLSGYTALIIVITIQTEPLL. The Cytoplasmic portion of the chain corresponds to 142 to 151; that stretch reads TPQFALERCS. A helical transmembrane segment spans residues 152–172; it reads EIVIGIGCAILADLLFSPRSI. The Periplasmic portion of the chain corresponds to 173-369; the sequence is KQEVDRELDC…RTTLSCILGT (197 aa). Residues 370–390 form a helical membrane-spanning segment; it reads LFWLWTGWTSGNGAMVMIAVV. The Cytoplasmic portion of the chain corresponds to 391–406; it reads TSLAMRLPNPRMVCID. A helical membrane pass occupies residues 407–427; it reads FIYGTLAALPLGLLYFLVIIP. Residues 428-430 lie on the Periplasmic side of the membrane; it reads NTQ. The helical transmembrane segment at 431–451 threads the bilayer; that stretch reads QSMLLLCLSLAVLGFFIGIEV. At 452–459 the chain is on the cytoplasmic side; it reads QKRRLGSM. The helical transmembrane segment at 460-480 threads the bilayer; it reads GALASTINIIVLDNPMTFHFI. Position 481 (Q481) is a topological domain, periplasmic. The helical transmembrane segment at 482–502 threads the bilayer; it reads FLDSALGQIVGCMLAFIVILL. The Cytoplasmic portion of the chain corresponds to 503–655; the sequence is VRDKSKDRTG…HKYQNALTDS (153 aa).

Belongs to the aromatic acid exporter ArAE (TC 2.A.85) family.

It localises to the cell inner membrane. Its function is as follows. Forms an efflux pump with AaeA. Could function as a metabolic relief valve, allowing to eliminate certain compounds when they accumulate to high levels in the cell. The polypeptide is p-hydroxybenzoic acid efflux pump subunit AaeB (Salmonella typhi).